The primary structure comprises 105 residues: Large ribosomal subunit protein uL24 (105 aa).

The protein belongs to the universal ribosomal protein uL24 family. Part of the 50S ribosomal subunit.

Functionally, one of two assembly initiator proteins, it binds directly to the 5'-end of the 23S rRNA, where it nucleates assembly of the 50S subunit. Its function is as follows. One of the proteins that surrounds the polypeptide exit tunnel on the outside of the subunit. The protein is Large ribosomal subunit protein uL24 of Francisella philomiragia subsp. philomiragia (strain ATCC 25017 / CCUG 19701 / FSC 153 / O#319-036).